The chain runs to 341 residues: Anthranilate phosphoribosyltransferase (341 aa).

Residues Gly79, 82 to 83 (GD), Thr87, 89 to 92 (NIST), 107 to 115 (KHGNRAASS), and Ala119 each bind 5-phospho-alpha-D-ribose 1-diphosphate. Gly79 lines the anthranilate pocket. Ser91 is a Mg(2+) binding site. Asn110 is a binding site for anthranilate. Arg165 is a binding site for anthranilate. Positions 224 and 225 each coordinate Mg(2+).

It belongs to the anthranilate phosphoribosyltransferase family. Homodimer. Requires Mg(2+) as cofactor.

The catalysed reaction is N-(5-phospho-beta-D-ribosyl)anthranilate + diphosphate = 5-phospho-alpha-D-ribose 1-diphosphate + anthranilate. The protein operates within amino-acid biosynthesis; L-tryptophan biosynthesis; L-tryptophan from chorismate: step 2/5. Catalyzes the transfer of the phosphoribosyl group of 5-phosphorylribose-1-pyrophosphate (PRPP) to anthranilate to yield N-(5'-phosphoribosyl)-anthranilate (PRA). The polypeptide is Anthranilate phosphoribosyltransferase (Lacticaseibacillus casei (strain BL23) (Lactobacillus casei)).